The following is a 542-amino-acid chain: Sensory neuron membrane protein 2 (542 aa).

Residues Met1–Val487 lie on the Extracellular side of the membrane. 4 N-linked (GlcNAc...) asparagine glycosylation sites follow: Asn33, Asn128, Asn238, and Asn274. 3 disulfides stabilise this stretch: Cys283–Cys351, Cys312–Cys378, and Cys353–Cys367. Residues Gln488–Ile508 form a helical membrane-spanning segment. The Cytoplasmic portion of the chain corresponds to Lys509–Lys542.

The protein belongs to the CD36 family. Detected in the antenna, legs and wings. Higher levels of expression detected in male compared to female.

Its subcellular location is the cell membrane. Functionally, plays an olfactory role that is not restricted to pheromone sensitivity. In Aedes aegypti (Yellowfever mosquito), this protein is Sensory neuron membrane protein 2.